We begin with the raw amino-acid sequence, 496 residues long: MELVVKSVSPETLKTATLVVAVGEGRKLGAAARQVDELSGGAISAVLKRGDLAGKVGQSLLLHSLPNLKAERVLLVGVGKDEELGDRPFRKIVAGILNTLKGLGGSDAVLALDEIIVKNRDSYGKTRLLAETLVDGEYTFDQFKSQKAEPRALKKITLLTIKAAQAEVQRAVNHATAIANGMAFTRNLGNLPPNICHPTFLGEQAKNLGKEFKDLKVEVLDEKKIKSLGMGSFYAVGQGSAQPPRLIVMQYNGGKKSEKPYALVGKGITFDTGGISLKPGAGMDEMKYDMGGAASVFGTLRAVLELKLPINLVCILACAENMPSGTASRPGDIVTTMSGQTVEILNTDAEGRLVLCDALTYSERFKPQAVIDIATLTGACVVALGAHTSGLLGNNDELIEQLLSAGKAADDRAWQLPLFDEYQEQLDSPFADIANIGGPKAGTITAACFLSRFTKNLNWAHLDIAGTAWTSGGKDKGATGRPVPLLTQYLLDRAKA.

Residues Lys266 and Asp271 each contribute to the Mn(2+) site. Residue Lys278 is part of the active site. Residues Asp289, Asp348, and Glu350 each coordinate Mn(2+). Residue Arg352 is part of the active site.

This sequence belongs to the peptidase M17 family. Mn(2+) serves as cofactor.

It localises to the cytoplasm. The catalysed reaction is Release of an N-terminal amino acid, Xaa-|-Yaa-, in which Xaa is preferably Leu, but may be other amino acids including Pro although not Arg or Lys, and Yaa may be Pro. Amino acid amides and methyl esters are also readily hydrolyzed, but rates on arylamides are exceedingly low.. It catalyses the reaction Release of an N-terminal amino acid, preferentially leucine, but not glutamic or aspartic acids.. Presumably involved in the processing and regular turnover of intracellular proteins. Catalyzes the removal of unsubstituted N-terminal amino acids from various peptides. This Pseudomonas fluorescens (strain Pf0-1) protein is Probable cytosol aminopeptidase.